Consider the following 295-residue polypeptide: Ribosomal RNA small subunit methyltransferase A (295 aa).

S-adenosyl-L-methionine is bound by residues asparagine 33, valine 35, glycine 60, glutamate 81, aspartate 111, and asparagine 129.

It belongs to the class I-like SAM-binding methyltransferase superfamily. rRNA adenine N(6)-methyltransferase family. RsmA subfamily.

It is found in the cytoplasm. It catalyses the reaction adenosine(1518)/adenosine(1519) in 16S rRNA + 4 S-adenosyl-L-methionine = N(6)-dimethyladenosine(1518)/N(6)-dimethyladenosine(1519) in 16S rRNA + 4 S-adenosyl-L-homocysteine + 4 H(+). Functionally, specifically dimethylates two adjacent adenosines (A1518 and A1519) in the loop of a conserved hairpin near the 3'-end of 16S rRNA in the 30S particle. May play a critical role in biogenesis of 30S subunits. The sequence is that of Ribosomal RNA small subunit methyltransferase A from Corynebacterium diphtheriae (strain ATCC 700971 / NCTC 13129 / Biotype gravis).